The sequence spans 400 residues: Phosphoglycerate kinase (400 aa).

Substrate-binding positions include 20–22, arginine 35, 58–61, arginine 115, and arginine 155; these read DLN and HQGR. ATP is bound by residues glutamate 330 and 356–359; that span reads GGDT.

This sequence belongs to the phosphoglycerate kinase family. As to quaternary structure, monomer.

The protein resides in the cytoplasm. The enzyme catalyses (2R)-3-phosphoglycerate + ATP = (2R)-3-phospho-glyceroyl phosphate + ADP. It functions in the pathway carbohydrate degradation; glycolysis; pyruvate from D-glyceraldehyde 3-phosphate: step 2/5. The chain is Phosphoglycerate kinase from Haloarcula marismortui (strain ATCC 43049 / DSM 3752 / JCM 8966 / VKM B-1809) (Halobacterium marismortui).